We begin with the raw amino-acid sequence, 116 residues long: Nucleoid-associated protein P9515_00191 (116 aa).

Residues 89 to 98 (STTTMKERMN) are compositionally biased toward basic and acidic residues. The segment at 89–116 (STTTMKERMNDLTGGLNLNLPGLDNNDS) is disordered. Over residues 99–116 (DLTGGLNLNLPGLDNNDS) the composition is skewed to low complexity.

It belongs to the YbaB/EbfC family. In terms of assembly, homodimer.

Its subcellular location is the cytoplasm. It is found in the nucleoid. Its function is as follows. Binds to DNA and alters its conformation. May be involved in regulation of gene expression, nucleoid organization and DNA protection. This chain is Nucleoid-associated protein P9515_00191, found in Prochlorococcus marinus (strain MIT 9515).